Here is a 184-residue protein sequence, read N- to C-terminus: Protein OPG161 (184 aa).

Residues 1 to 33 are Intravirion-facing; sequence MMTPENDEEQTSVFSATVYGDKIQGKNKRKRVI. A helical transmembrane segment spans residues 34–56; that stretch reads GICIRISMVISLLSMITMSAFLI. The Virion surface segment spans residues 57–184; the sequence is VRLNQCMSAN…RKYFCVKTMN (128 aa). Positions 98 to 184 are C-type lectin-like domain; sequence SCNGLYYQGS…RKYFCVKTMN (87 aa). The N-linked (GlcNAc...) asparagine; by host glycan is linked to N134.

It belongs to the orthopoxvirus OPG161 family. As to quaternary structure, homodimer, disulfide-linked. Interacts with protein OPG190. Interacts (via C-terminus) with protein OPG164. Interacts with OPG162.

Its subcellular location is the virion membrane. The protein resides in the host membrane. In terms of biological role, forms a complex with OPG162 and OPG190 to coordinate the incorporation of OPG164 into wrapped enveloped virion (EV) membranes and, subsequently, the production of actin tails. Therefore plays an essential role in efficient cell-to-cell spread of viral particles. The chain is Protein OPG161 (OPG161) from Homo sapiens (Human).